The following is a 130-amino-acid chain: uncharacterized protein (130 aa).

Positions 85 to 116 are disordered; sequence NDSDDDCSENDSDGDCSENDSDNDYSENESDC.

It belongs to the mimivirus L5 family.

This is an uncharacterized protein from Acanthamoeba polyphaga mimivirus (APMV).